The sequence spans 309 residues: Tagatose-6-phosphate kinase (309 aa).

It belongs to the carbohydrate kinase PfkB family. LacC subfamily.

The enzyme catalyses D-tagatofuranose 6-phosphate + ATP = D-tagatofuranose 1,6-bisphosphate + ADP + H(+). The protein operates within carbohydrate metabolism; D-tagatose 6-phosphate degradation; D-glyceraldehyde 3-phosphate and glycerone phosphate from D-tagatose 6-phosphate: step 1/2. The polypeptide is Tagatose-6-phosphate kinase (Streptococcus pneumoniae (strain 70585)).